We begin with the raw amino-acid sequence, 163 residues long: Pheromone-binding protein (163 aa).

The N-terminal stretch at 1-21 is a signal peptide; sequence MLRKISLLLLPVFVAINLVHS. 3 cysteine pairs are disulfide-bonded: Cys-40/Cys-75, Cys-71/Cys-129, and Cys-118/Cys-138.

Belongs to the PBP/GOBP family. In terms of assembly, homodimer. In terms of tissue distribution, antenna.

Functionally, this major soluble protein in olfactory sensilla of male moths might serve to solubilize the extremely hydrophobic pheromone molecules and to transport pheromone through the aqueous lymph to receptors located on olfactory cilia. The polypeptide is Pheromone-binding protein (Antheraea polyphemus (Polyphemus moth)).